The following is a 576-amino-acid chain: uncharacterized protein (576 aa).

Over 1–8 the chain is Cytoplasmic; that stretch reads MSLSLGAA. Residues 9-29 traverse the membrane as a helical segment; the sequence is IYIALKPIFKIYTIMLVGYLV. The Extracellular segment spans residues 30–45; that stretch reads AKFDIVSMENAKGISN. A helical transmembrane segment spans residues 46–66; sequence MVVNAILPCLTFNKIVSNISW. Residues 67–71 lie on the Cytoplasmic side of the membrane; it reads RDIKE. A helical transmembrane segment spans residues 72–92; it reads IGVIILSAFILFVLGATGALF. Topologically, residues 93-103 are extracellular; sequence TTFATTVPKKF. Residues 104-124 traverse the membrane as a helical segment; that stretch reads FWGLIFAGFFPNISDLPIAYI. Topologically, residues 125-141 are cytoplasmic; the sequence is QSMGNGSIFTAEEADKG. Residues 142–162 form a helical membrane-spanning segment; it reads VAYSCIFLFIQSFLMMNFGMW. The Extracellular segment spans residues 163–400; it reads RVVGLDFRDT…FIINCLRPAS (238 aa). Residues 401–421 traverse the membrane as a helical segment; it reads LGAILGIICALIPWVKACFVT. The Cytoplasmic portion of the chain corresponds to 422–437; it reads TYVHVHKAPDGEPVLN. The chain crosses the membrane as a helical span at residues 438–458; it reads FLMDFTEYIGNACVPLGLLLL. At 459–476 the chain is on the extracellular side; the sequence is GGTLARLEIKSLPPGFIK. A helical transmembrane segment spans residues 477 to 497; it reads SALLMTCFRLIVIPIIGVLWV. Over 498–512 the chain is Cytoplasmic; the sequence is NKLYSIDWLDTGIGK. A helical membrane pass occupies residues 513-533; that stretch reads FDMILTWSMPSATAQVYFTAF. At 534–545 the chain is on the extracellular side; that stretch reads YTPACGDHIQMN. A helical transmembrane segment spans residues 546-566; sequence CLSVLFVMQYAILFITVAFVV. At 567 to 576 the chain is on the cytoplasmic side; it reads TYTLKVDLKV.

This sequence belongs to the auxin efflux carrier (TC 2.A.69) family.

The protein resides in the membrane. This is an uncharacterized protein from Saccharomyces cerevisiae (strain ATCC 204508 / S288c) (Baker's yeast).